The chain runs to 196 residues: MVKIGVLGLQGAVREHVKSVEASGAEAVVVKRIEQLEEIDGLILPGGESTTMRRLIDKYAFMEPLRTFAKSGKPMFGTCAGMILLAKTLIGYEEAHIGAMDITVERNAFGRQKDSFEAALSIKGVGEDFVGVFIRAPYVVNVADDVEVLSMHGERMVAVRQGPFLAASFHPELTDDHRVTAYFVEMVKEAKMKKVV.

L-glutamine is bound at residue 47 to 49 (GES). The active-site Nucleophile is the Cys79. Residues Arg106 and 134–135 (IR) each bind L-glutamine. Active-site charge relay system residues include His170 and Glu172.

It belongs to the glutaminase PdxT/SNO family. In terms of assembly, in the presence of PdxS, forms a dodecamer of heterodimers. Only shows activity in the heterodimer.

It catalyses the reaction aldehydo-D-ribose 5-phosphate + D-glyceraldehyde 3-phosphate + L-glutamine = pyridoxal 5'-phosphate + L-glutamate + phosphate + 3 H2O + H(+). The catalysed reaction is L-glutamine + H2O = L-glutamate + NH4(+). The protein operates within cofactor biosynthesis; pyridoxal 5'-phosphate biosynthesis. In terms of biological role, catalyzes the hydrolysis of glutamine to glutamate and ammonia as part of the biosynthesis of pyridoxal 5'-phosphate. The resulting ammonia molecule is channeled to the active site of PdxS. In Bacillus mycoides (strain KBAB4) (Bacillus weihenstephanensis), this protein is Pyridoxal 5'-phosphate synthase subunit PdxT.